The primary structure comprises 185 residues: Ribosome-recycling factor (185 aa).

The interval 136 to 161 (MDSLKTDEKKGEIGEDDRKRRETEVQ) is disordered.

The protein belongs to the RRF family.

It is found in the cytoplasm. In terms of biological role, responsible for the release of ribosomes from messenger RNA at the termination of protein biosynthesis. May increase the efficiency of translation by recycling ribosomes from one round of translation to another. The chain is Ribosome-recycling factor from Rhizorhabdus wittichii (strain DSM 6014 / CCUG 31198 / JCM 15750 / NBRC 105917 / EY 4224 / RW1) (Sphingomonas wittichii).